Consider the following 463-residue polypeptide: ATP-dependent protease ATPase subunit HslU (463 aa).

ATP contacts are provided by residues valine 21, 63–68, aspartate 276, glutamate 341, and arginine 413; that span reads GVGKTE.

Belongs to the ClpX chaperone family. HslU subfamily. In terms of assembly, a double ring-shaped homohexamer of HslV is capped on each side by a ring-shaped HslU homohexamer. The assembly of the HslU/HslV complex is dependent on binding of ATP.

The protein localises to the cytoplasm. In terms of biological role, ATPase subunit of a proteasome-like degradation complex; this subunit has chaperone activity. The binding of ATP and its subsequent hydrolysis by HslU are essential for unfolding of protein substrates subsequently hydrolyzed by HslV. HslU recognizes the N-terminal part of its protein substrates and unfolds these before they are guided to HslV for hydrolysis. The chain is ATP-dependent protease ATPase subunit HslU from Thermotoga sp. (strain RQ2).